Reading from the N-terminus, the 270-residue chain is Bacterial microcompartment shell protein PduB (270 aa).

BMC circularly permuted domains are found at residues 47–152 (EFVG…DRTF) and 154–262 (DVYA…GSEP).

It belongs to the EutL/PduB family. As to quaternary structure, homotrimerizes to form a pseudohexamer with a central pore. The trimers pack into an array. Both forms interact with shell protein PduA. In terms of processing, in purified BMCs seen as a 30.0 kDa and 25.0 kDa form; the smaller form is called PduB'.

It is found in the bacterial microcompartment. It functions in the pathway polyol metabolism; 1,2-propanediol degradation. Functionally, the two proteins produced are among the major shell proteins of the bacterial microcompartment (BMC) shell dedicated to 1,2-propanediol (1,2-PD) degradation. Overexpression of the gene gives large amorphous intracellular structures; when only PduB is overexpressed large circular bodies are observed which contain concentric rings, whereas with PduB' overexpression internal bodies with regular straight-lined structures were generated. The N-terminus of the long form (PduB) is required for correct formation of BMCs. May play a major role in binding the enzyme contents to the shell. In terms of biological role, expression of a cosmid containing the full 21-gene pdu operon in E.coli allows E.coli to grow on 1,2-propanediol (1,2-PD) with the appearance of BMCs in its cytoplasm. The 1,2-PD-specific bacterial microcompartment (BMC) concentrates low levels of 1,2-PD catabolic enzymes, concentrates volatile reaction intermediates thus enhancing pathway flux and keeps the level of toxic, mutagenic propionaldehyde low. The polypeptide is Bacterial microcompartment shell protein PduB (Citrobacter freundii).